A 174-amino-acid chain; its full sequence is Auxin-responsive protein IAA2 (174 aa).

The short motif at 16 to 20 (LCLGL) is the EAR-like (transcriptional repression) element. Residues 44–67 (FEETRDEEESTPPTKTQIVGWPPV) are disordered. Residues 77–164 (VSYVKVSMDG…SCKRLRIMKG (88 aa)) form the PB1 domain.

This sequence belongs to the Aux/IAA family. As to quaternary structure, homodimers and heterodimers. Interacts with the auxin-responsive protein IAA1. Interacts with TPL. Preferentially expressed in vegetative organs.

The protein localises to the nucleus. Its function is as follows. Aux/IAA proteins are short-lived transcriptional factors that function as repressors of early auxin response genes at low auxin concentrations. Repression is thought to result from the interaction with auxin response factors (ARFs), proteins that bind to the auxin-responsive promoter element (AuxRE). Formation of heterodimers with ARF proteins may alter their ability to modulate early auxin response genes expression. This is Auxin-responsive protein IAA2 (IAA2) from Arabidopsis thaliana (Mouse-ear cress).